We begin with the raw amino-acid sequence, 731 residues long: 1,4-alpha-glucan branching enzyme GlgB (731 aa).

The Nucleophile role is filled by Asp411. The active-site Proton donor is the Glu464.

The protein belongs to the glycosyl hydrolase 13 family. GlgB subfamily. As to quaternary structure, monomer.

The enzyme catalyses Transfers a segment of a (1-&gt;4)-alpha-D-glucan chain to a primary hydroxy group in a similar glucan chain.. It functions in the pathway glycan biosynthesis; glycogen biosynthesis. Functionally, catalyzes the formation of the alpha-1,6-glucosidic linkages in glycogen by scission of a 1,4-alpha-linked oligosaccharide from growing alpha-1,4-glucan chains and the subsequent attachment of the oligosaccharide to the alpha-1,6 position. In Mycobacterium bovis (strain ATCC BAA-935 / AF2122/97), this protein is 1,4-alpha-glucan branching enzyme GlgB.